The sequence spans 572 residues: Proline--tRNA ligase (572 aa).

The protein belongs to the class-II aminoacyl-tRNA synthetase family. ProS type 1 subfamily. Homodimer.

The protein resides in the cytoplasm. It catalyses the reaction tRNA(Pro) + L-proline + ATP = L-prolyl-tRNA(Pro) + AMP + diphosphate. Catalyzes the attachment of proline to tRNA(Pro) in a two-step reaction: proline is first activated by ATP to form Pro-AMP and then transferred to the acceptor end of tRNA(Pro). As ProRS can inadvertently accommodate and process non-cognate amino acids such as alanine and cysteine, to avoid such errors it has two additional distinct editing activities against alanine. One activity is designated as 'pretransfer' editing and involves the tRNA(Pro)-independent hydrolysis of activated Ala-AMP. The other activity is designated 'posttransfer' editing and involves deacylation of mischarged Ala-tRNA(Pro). The misacylated Cys-tRNA(Pro) is not edited by ProRS. This chain is Proline--tRNA ligase, found in Yersinia pestis bv. Antiqua (strain Antiqua).